Here is a 152-residue protein sequence, read N- to C-terminus: Atypical leghemoglobin 2-1 (152 aa).

Residues 3–152 enclose the Globin domain; the sequence is TFSEEQEALV…LAGVIKKGMS (150 aa). Nitrated tyrosine is present on tyrosine 31. Position 46 (serine 46) interacts with heme b. Serine 46 carries the phosphoserine modification. Position 64 (histidine 64) interacts with O2. The heme b site is built by lysine 67, histidine 99, and arginine 102. Residue tyrosine 140 is modified to Nitrated tyrosine.

It belongs to the plant globin family. As to quaternary structure, monomer. Post-translationally, nitrated in effective nodules and particularly in hypoxic conditions; this mechanism may play a protective role in the symbiosis by buffering toxic peroxynitrite NO(2)(-). Nitration level decrease during nodule senescence. Phosphorylation at Ser-46 disrupts the molecular environment of its porphyrin ring oxygen binding pocket, thus leading to a reduced oxygen consumption and to the delivery of oxygen O(2) to symbiosomes. Mainly expressed in leaves and, at low levels, in roots of non-nodulated plants. However, accumulates also in nodules and roots, and, to a lower extent, in leaves, stems, flowers and fruits, in nodulated plants.

Functionally, atypical leghemoglobin that reversibly binds oxygen O(2) through a pentacoordinated heme iron. In nodules, facilitates the diffusion of oxygen to the bacteroids while preventing the bacterial nitrogenase from being inactivated by buffering dioxygen, nitric oxide and carbon monoxide. This role is essential for symbiotic nitrogen fixation (SNF). Seems not restricted to symbiotic nitrogen fixation and root nodules formation, but also contributes to general plant development and metabolism. The chain is Atypical leghemoglobin 2-1 from Lotus japonicus (Lotus corniculatus var. japonicus).